The following is a 405-amino-acid chain: Putative aminotransferase AatC (405 aa).

At K238 the chain carries N6-(pyridoxal phosphate)lysine.

It belongs to the class-I pyridoxal-phosphate-dependent aminotransferase family. In terms of assembly, homodimer. It depends on pyridoxal 5'-phosphate as a cofactor.

The protein resides in the cytoplasm. This is Putative aminotransferase AatC (aatC) from Rhizobium meliloti (strain 1021) (Ensifer meliloti).